The chain runs to 200 residues: Protein GrpE (200 aa).

Acidic residues-rich tracts occupy residues 1 to 17 (MNEQPNEELQSEDEQFD) and 34 to 44 (AFAEAGEETRD). Positions 1-49 (MNEQPNEELQSEDEQFDPQETVSFEGETAANDEAFAEAGEETRDEEMTR) are disordered.

This sequence belongs to the GrpE family. In terms of assembly, homodimer.

It is found in the cytoplasm. Functionally, participates actively in the response to hyperosmotic and heat shock by preventing the aggregation of stress-denatured proteins, in association with DnaK and GrpE. It is the nucleotide exchange factor for DnaK and may function as a thermosensor. Unfolded proteins bind initially to DnaJ; upon interaction with the DnaJ-bound protein, DnaK hydrolyzes its bound ATP, resulting in the formation of a stable complex. GrpE releases ADP from DnaK; ATP binding to DnaK triggers the release of the substrate protein, thus completing the reaction cycle. Several rounds of ATP-dependent interactions between DnaJ, DnaK and GrpE are required for fully efficient folding. The protein is Protein GrpE of Rhodopirellula baltica (strain DSM 10527 / NCIMB 13988 / SH1).